The chain runs to 246 residues: Granzyme H (246 aa).

The N-terminal stretch at 1 to 18 is a signal peptide; that stretch reads MQPFLLLLAFLLTPGAGT. Positions 19 to 20 are cleaved as a propeptide — activation peptide; that stretch reads EE. The Peptidase S1 domain occupies 21–244; that stretch reads IIGGHEAKPH…FLPWIKRTMK (224 aa). The tract at residues 46 to 48 is mediates the preference for acidic residues at the P3' and P4' sites; it reads RKR. Cys-49 and Cys-65 are oxidised to a cystine. The active-site Charge relay system is the His-64. Residues Asn-71 and Asn-104 are each glycosylated (N-linked (GlcNAc...) asparagine). Asp-108 acts as the Charge relay system in catalysis. 2 cysteine pairs are disulfide-bonded: Cys-142–Cys-208 and Cys-172–Cys-187. The N-linked (GlcNAc...) asparagine glycan is linked to Asn-179. The active-site Charge relay system is the Ser-202.

The protein belongs to the peptidase S1 family. Granzyme subfamily. As to expression, constitutively expressed in NK cells.

The protein resides in the cytolytic granule. Inhibited by SERPINB1. In terms of biological role, cytotoxic chymotrypsin-like serine protease with preference for bulky and aromatic residues at the P1 position and acidic residues at the P3' and P4' sites. Probably necessary for target cell lysis in cell-mediated immune responses. Participates in the antiviral response via direct cleavage of several proteins essential for viral replication. The chain is Granzyme H (GZMH) from Homo sapiens (Human).